The sequence spans 634 residues: 1-deoxy-D-xylulose-5-phosphate synthase (634 aa).

Thiamine diphosphate contacts are provided by residues H74 and A115 to S117. A Mg(2+)-binding site is contributed by D146. Thiamine diphosphate is bound by residues G147–A148, N176, Y283, and E365. Residue N176 participates in Mg(2+) binding.

The protein belongs to the transketolase family. DXPS subfamily. Homodimer. The cofactor is Mg(2+). Requires thiamine diphosphate as cofactor.

The catalysed reaction is D-glyceraldehyde 3-phosphate + pyruvate + H(+) = 1-deoxy-D-xylulose 5-phosphate + CO2. The protein operates within metabolic intermediate biosynthesis; 1-deoxy-D-xylulose 5-phosphate biosynthesis; 1-deoxy-D-xylulose 5-phosphate from D-glyceraldehyde 3-phosphate and pyruvate: step 1/1. In terms of biological role, catalyzes the acyloin condensation reaction between C atoms 2 and 3 of pyruvate and glyceraldehyde 3-phosphate to yield 1-deoxy-D-xylulose-5-phosphate (DXP). The sequence is that of 1-deoxy-D-xylulose-5-phosphate synthase from Burkholderia ambifaria (strain MC40-6).